We begin with the raw amino-acid sequence, 68 residues long: MASNNKEMIEEIRKQLNVVNVQLIDPDKFEDADEEKVKEIHSFVTSKDNFSPSEVTAIASELGELRQS.

The protein belongs to the UPF0435 family.

This chain is UPF0435 protein Sca_1453, found in Staphylococcus carnosus (strain TM300).